Consider the following 163-residue polypeptide: Probable RNA-binding protein EIF1AD (163 aa).

Positions 18 to 96 (MMEDDYELPT…VKAEISKILT (79 aa)) constitute an S1-like domain. The disordered stretch occupies residues 106–163 (AGIWPERFAKNPPQEAKAQNDDEDSDFEDDLTPNTNRPVQESDEEDEDTDTESSDEED). 2 stretches are compositionally biased toward acidic residues: residues 126 to 136 (DDEDSDFEDDL) and 146 to 163 (ESDE…DEED).

Belongs to the EIF1AD family.

This Drosophila pseudoobscura pseudoobscura (Fruit fly) protein is Probable RNA-binding protein EIF1AD.